The primary structure comprises 668 residues: Major S-layer protein (668 aa).

The signal sequence occupies residues 1-24 (MKRFAAVTLAALMLLTVFASAASA). Asparagine 36, asparagine 65, asparagine 111, asparagine 265, asparagine 583, asparagine 596, asparagine 602, asparagine 608, asparagine 617, and asparagine 635 each carry an N-linked (GlcNAc...) asparagine glycan. Residues 584–650 (ETTSITKPDE…ESNGSPGFGV (67 aa)) form a disordered region. Over residues 596–611 (NETVSDNETMPDNTSS) the composition is skewed to polar residues. A compositionally biased stretch (acidic residues) spans 631 to 641 (EPTDNETEPDE). The chain crosses the membrane as a helical span at residues 644–664 (GSPGFGVVLGLAGLLGVVYLV).

The protein belongs to the Methanosarcinales S-layer protein family. Post-translationally, glycosylated.

Its subcellular location is the secreted. The protein localises to the cell wall. It is found in the S-layer. The protein resides in the cell membrane. In terms of biological role, S-layer protein. The S-layer is a paracrystalline mono-layered assembly of proteins which coat the surface of the cell. In Methanosarcina barkeri (strain Fusaro / DSM 804), this protein is Major S-layer protein.